The chain runs to 289 residues: Pyridoxal kinase PdxY (289 aa).

Residues S9 and 44–45 (TQ) each bind substrate. Residues D112, A144, E149, and K182 each contribute to the ATP site. D225 contributes to the substrate binding site.

The protein belongs to the pyridoxine kinase family. PdxY subfamily. Homodimer. The cofactor is Mg(2+).

The catalysed reaction is pyridoxal + ATP = pyridoxal 5'-phosphate + ADP + H(+). The protein operates within cofactor metabolism; pyridoxal 5'-phosphate salvage; pyridoxal 5'-phosphate from pyridoxal: step 1/1. Pyridoxal kinase involved in the salvage pathway of pyridoxal 5'-phosphate (PLP). Catalyzes the phosphorylation of pyridoxal to PLP. The sequence is that of Pyridoxal kinase PdxY from Aliivibrio fischeri (strain ATCC 700601 / ES114) (Vibrio fischeri).